The primary structure comprises 518 residues: Crotonobetaine/carnitine--CoA ligase (518 aa).

It belongs to the ATP-dependent AMP-binding enzyme family.

It carries out the reaction 4-(trimethylamino)butanoate + ATP + CoA = 4-(trimethylamino)butanoyl-CoA + AMP + diphosphate. The catalysed reaction is crotonobetaine + ATP + CoA = crotonobetainyl-CoA + AMP + diphosphate. It catalyses the reaction (R)-carnitine + ATP + CoA = (R)-carnitinyl-CoA + AMP + diphosphate. It participates in amine and polyamine metabolism; carnitine metabolism. In terms of biological role, catalyzes the transfer of CoA to carnitine, generating the initial carnitinyl-CoA needed for the CaiB reaction cycle. Also has activity toward crotonobetaine and gamma-butyrobetaine. The protein is Crotonobetaine/carnitine--CoA ligase of Proteus mirabilis (strain HI4320).